The sequence spans 653 residues: tRNA 5-methylaminomethyl-2-thiouridine biosynthesis bifunctional protein MnmC (653 aa).

The interval 1–233 is tRNA (mnm(5)s(2)U34)-methyltransferase; it reads MKTAPITPGR…KRDITVARFT (233 aa). The tract at residues 258 to 653 is FAD-dependent cmnm(5)s(2)U34 oxidoreductase; that stretch reads IGAGLAGCAA…YALPRWRSDS (396 aa).

This sequence in the N-terminal section; belongs to the methyltransferase superfamily. tRNA (mnm(5)s(2)U34)-methyltransferase family. It in the C-terminal section; belongs to the DAO family. The cofactor is FAD.

It is found in the cytoplasm. The catalysed reaction is 5-aminomethyl-2-thiouridine(34) in tRNA + S-adenosyl-L-methionine = 5-methylaminomethyl-2-thiouridine(34) in tRNA + S-adenosyl-L-homocysteine + H(+). Functionally, catalyzes the last two steps in the biosynthesis of 5-methylaminomethyl-2-thiouridine (mnm(5)s(2)U) at the wobble position (U34) in tRNA. Catalyzes the FAD-dependent demodification of cmnm(5)s(2)U34 to nm(5)s(2)U34, followed by the transfer of a methyl group from S-adenosyl-L-methionine to nm(5)s(2)U34, to form mnm(5)s(2)U34. The polypeptide is tRNA 5-methylaminomethyl-2-thiouridine biosynthesis bifunctional protein MnmC (Methylibium petroleiphilum (strain ATCC BAA-1232 / LMG 22953 / PM1)).